The chain runs to 488 residues: UDP-glycosyltransferase 85A3 (488 aa).

UDP-alpha-D-glucose-binding positions include Ser306, 363–365, 380–388, and 402–405; these read CPQ, HCGWNSTLE, and FAEQ.

This sequence belongs to the UDP-glycosyltransferase family. Expressed in roots and flowers.

The protein is UDP-glycosyltransferase 85A3 (UGT85A3) of Arabidopsis thaliana (Mouse-ear cress).